Reading from the N-terminus, the 237-residue chain is Lectin alpha chain (237 aa).

2 residues coordinate Mn(2+): glutamate 8 and aspartate 10. Ca(2+)-binding residues include aspartate 10, tyrosine 12, asparagine 14, and aspartate 19. An a carbohydrate-binding site is contributed by tyrosine 12. Mn(2+) is bound by residues aspartate 19, histidine 24, and serine 34. 99-100 (LY) lines the a carbohydrate pocket. Aspartate 208 contributes to the Ca(2+) binding site. An a carbohydrate-binding site is contributed by arginine 228.

It belongs to the leguminous lectin family. Equilibrium between homodimer and homotetramer. Oligomerization is pH-dependent with homotetramers forming at pH 6.5 and above. The beta and gamma chains are produced by partial proteolytic processing of the lectin alpha chain by an asparaginyl endopeptidase. Mixture of 60% alpha lectin and 40% of its beta and gamma proteolytic fragments.

In terms of biological role, D-mannose/D-glucose-binding lectin. Has anti-inflammatory activity in rats. Induces histamine release in mast cells from rat. Induces lymphocyte proliferation and IFNG production. In Dioclea guianensis, this protein is Lectin alpha chain.